A 187-amino-acid chain; its full sequence is NADH-dependent FMN reductase SfnF (187 aa).

It belongs to the SsuE family.

The catalysed reaction is FMNH2 + NAD(+) = FMN + NADH + 2 H(+). Its function is as follows. Involved in the dimethyl sulfide degradation pathway. Catalyzes the NADH-dependent reduction of FMN. This chain is NADH-dependent FMN reductase SfnF, found in Pseudomonas fluorescens (strain Pf0-1).